The sequence spans 339 residues: Phenylalanine--tRNA ligase alpha subunit (339 aa).

Glutamate 254 contributes to the Mg(2+) binding site.

The protein belongs to the class-II aminoacyl-tRNA synthetase family. Phe-tRNA synthetase alpha subunit type 1 subfamily. In terms of assembly, tetramer of two alpha and two beta subunits. The cofactor is Mg(2+).

Its subcellular location is the cytoplasm. The enzyme catalyses tRNA(Phe) + L-phenylalanine + ATP = L-phenylalanyl-tRNA(Phe) + AMP + diphosphate + H(+). In Chlamydia pneumoniae (Chlamydophila pneumoniae), this protein is Phenylalanine--tRNA ligase alpha subunit (pheS).